Here is a 362-residue protein sequence, read N- to C-terminus: Sulfate/thiosulfate import ATP-binding protein CysA (362 aa).

The ABC transporter domain occupies 3–237 (IEINNISKYF…PASRFVMEFL (235 aa)). Residue 35 to 42 (GPSGSGKT) coordinates ATP.

It belongs to the ABC transporter superfamily. Sulfate/tungstate importer (TC 3.A.1.6) family. In terms of assembly, the complex is composed of two ATP-binding proteins (CysA), two transmembrane proteins (CysT and CysW) and a solute-binding protein (CysP).

Its subcellular location is the cell inner membrane. It catalyses the reaction sulfate(out) + ATP + H2O = sulfate(in) + ADP + phosphate + H(+). The enzyme catalyses thiosulfate(out) + ATP + H2O = thiosulfate(in) + ADP + phosphate + H(+). Its function is as follows. Part of the ABC transporter complex CysAWTP involved in sulfate/thiosulfate import. Responsible for energy coupling to the transport system. The protein is Sulfate/thiosulfate import ATP-binding protein CysA of Photorhabdus laumondii subsp. laumondii (strain DSM 15139 / CIP 105565 / TT01) (Photorhabdus luminescens subsp. laumondii).